Here is a 36-residue protein sequence, read N- to C-terminus: Photosystem I reaction center subunit VIII (36 aa).

A helical membrane pass occupies residues 6 to 28 (LPSIFVPXVGLVFPAIAMASXFL).

Belongs to the PsaI family.

It localises to the plastid. The protein localises to the chloroplast thylakoid membrane. May help in the organization of the PsaL subunit. This Acorus gramineus (Dwarf sweet flag) protein is Photosystem I reaction center subunit VIII.